A 485-amino-acid polypeptide reads, in one-letter code: Glucagon receptor (485 aa).

A signal peptide spans 1-26; that stretch reads MLLTQLHCPYLLLLLVVLSCLPKAPS. At 27 to 137 the chain is on the extracellular side; that stretch reads AQVMDFLFEK…EIEVQKGVAK (111 aa). 3 cysteine pairs are disulfide-bonded: Cys-44–Cys-68, Cys-59–Cys-101, and Cys-82–Cys-122. Residues Asn-47, Asn-60, Asn-75, and Asn-79 are each glycosylated (N-linked (GlcNAc...) asparagine). Residues 138–162 form a helical membrane-spanning segment; sequence MYSSYQVMYTVGYSLSLGALLLALV. Residues 163-174 are Cytoplasmic-facing; that stretch reads ILLGLRKLHCTR. The chain crosses the membrane as a helical span at residues 175-199; it reads NYIHGNLFASFVLKAGSVLVIDWLL. The Extracellular segment spans residues 200–226; the sequence is KTRYSQKIGDDLSVSVWLSDGAVAGCR. Cysteines 225 and 295 form a disulfide. Residues 227–250 form a helical membrane-spanning segment; sequence VATVIMQYGIIANYCWLLVEGVYL. Residues 251 to 264 lie on the Cytoplasmic side of the membrane; the sequence is YSLLSITTFSEKSF. Residues 265 to 286 traverse the membrane as a helical segment; the sequence is FSLYLCIGWGSPLLFVIPWVVV. The Extracellular portion of the chain corresponds to 287-304; sequence KCLFENVQCWTSNDNMGF. The helical transmembrane segment at 305-327 threads the bilayer; that stretch reads WWILRIPVLLAILINFFIFVRII. The Cytoplasmic segment spans residues 328–351; it reads HLLVAKLRAHQMHYADYKFRLARS. The tract at residues 351-354 is important for allosteric inhibitor binding; that stretch reads STLT. The chain crosses the membrane as a helical span at residues 352–370; it reads TLTLIPLLGVHEVVFAFVT. Topologically, residues 371–382 are extracellular; it reads DEHAQGTLRSTK. A helical membrane pass occupies residues 383–403; sequence LFFDLFFSSFQGLLVAVLYCF. Residues 404 to 485 lie on the Cytoplasmic side of the membrane; sequence LNKEVQAELL…SLPRLADSPT (82 aa). Residues 455 to 485 are disordered; the sequence is MSAGSSSGTGCEPSAKTSLASSLPRLADSPT. The segment covering 456–475 has biased composition (polar residues); that stretch reads SAGSSSGTGCEPSAKTSLAS. Phosphoserine occurs at positions 460 and 476.

Belongs to the G-protein coupled receptor 2 family. Post-translationally, ligand-binding promotes phosphorylation of serine residues in the C-terminal cytoplasmic domain. Phosphorylation is important for receptor endocytosis after ligand-binding.

The protein resides in the cell membrane. Functionally, G-protein coupled receptor for glucagon that plays a central role in the regulation of blood glucose levels and glucose homeostasis. Regulates the rate of hepatic glucose production by promoting glycogen hydrolysis and gluconeogenesis. Plays an important role in mediating the responses to fasting. Ligand binding causes a conformation change that triggers signaling via guanine nucleotide-binding proteins (G proteins) and modulates the activity of down-stream effectors, such as adenylate cyclase. Promotes activation of adenylate cyclase. Besides, plays a role in signaling via a phosphatidylinositol-calcium second messenger system. This Rattus norvegicus (Rat) protein is Glucagon receptor (Gcgr).